We begin with the raw amino-acid sequence, 196 residues long: ATP-dependent Clp protease proteolytic subunit (196 aa).

The active-site Nucleophile is the Ser98. The active site involves His123.

Belongs to the peptidase S14 family. Fourteen ClpP subunits assemble into 2 heptameric rings which stack back to back to give a disk-like structure with a central cavity, resembling the structure of eukaryotic proteasomes.

The protein localises to the cytoplasm. It catalyses the reaction Hydrolysis of proteins to small peptides in the presence of ATP and magnesium. alpha-casein is the usual test substrate. In the absence of ATP, only oligopeptides shorter than five residues are hydrolyzed (such as succinyl-Leu-Tyr-|-NHMec, and Leu-Tyr-Leu-|-Tyr-Trp, in which cleavage of the -Tyr-|-Leu- and -Tyr-|-Trp bonds also occurs).. In terms of biological role, cleaves peptides in various proteins in a process that requires ATP hydrolysis. Has a chymotrypsin-like activity. Plays a major role in the degradation of misfolded proteins. The sequence is that of ATP-dependent Clp protease proteolytic subunit from Actinobacillus pleuropneumoniae serotype 7 (strain AP76).